Consider the following 287-residue polypeptide: Inactive phospholipid phosphatase 7 (287 aa).

The disordered stretch occupies residues 1–75 (MPANQTRSRA…NNKDKKELPE (75 aa)). Over 1 to 120 (MPANQTRSRA…SSSWGSVRSM (120 aa)) the chain is Cytoplasmic. Positions 31 to 40 (SGGGGGGGES) are enriched in gly residues. The segment covering 49 to 65 (QRQQQNQQQQGDNPQPE) has biased composition (low complexity). A helical membrane pass occupies residues 121-141 (VKLLALTGHGIPWVFGTIVCL). Residues 142 to 146 (MRSNT) lie on the Extracellular side of the membrane. A helical transmembrane segment spans residues 147–167 (LAGQEVLVNLLLALLLDVMTV). Residues 168-215 (SGMQKLVKRKGPWEMPPGFFDYLAMDIYSFPAAHASRAVMVSKFLLAH) are Cytoplasmic-facing. Residues 216-236 (LVLAVPLRILLVLWAILVGIS) form a helical membrane-spanning segment. At 237-247 (RVLLGRHHLTD) the chain is on the extracellular side. The chain crosses the membrane as a helical span at residues 248-268 (VGCGFALGFLHYSLVEMVWLS). Topologically, residues 269–287 (SNTCQTLISIGTFNWSPLY) are cytoplasmic.

This sequence belongs to the PA-phosphatase related phosphoesterase family.

The protein resides in the nucleus envelope. It is found in the endoplasmic reticulum membrane. It localises to the membrane. In terms of biological role, plays a role as negative regulator of myoblast differentiation, in part through effects on MTOR signaling. Has no detectable enzymatic activity. This Danio rerio (Zebrafish) protein is Inactive phospholipid phosphatase 7.